The chain runs to 207 residues: Putative 3-methyladenine DNA glycosylase (207 aa).

It belongs to the DNA glycosylase MPG family.

The protein is Putative 3-methyladenine DNA glycosylase of Burkholderia cenocepacia (strain HI2424).